Reading from the N-terminus, the 104-residue chain is Protein KleF (104 aa).

The chain is Protein KleF (kleF) from Escherichia coli.